The chain runs to 198 residues: Large ribosomal subunit protein bL12m (198 aa).

A mitochondrion-targeting transit peptide spans 1–36 (MLPAAARPLWGPCLGLRAAAFRLARRQVPCVCAVRH). Lys125, Lys138, Lys142, and Lys144 each carry N6-acetyllysine. Lys150 bears the N6-acetyllysine; alternate mark. Lys150 is modified (N6-succinyllysine; alternate). Lys150 is covalently cross-linked (Glycyl lysine isopeptide (Lys-Gly) (interchain with G-Cter in ubiquitin)). Lys162 bears the N6-succinyllysine mark. An N6-acetyllysine mark is found at Lys163 and Lys173. Lys178 carries the post-translational modification N6-acetyllysine; alternate. An N6-succinyllysine; alternate modification is found at Lys178. At Lys185 the chain carries N6-acetyllysine.

It belongs to the bacterial ribosomal protein bL12 family. As to quaternary structure, component of the mitochondrial large ribosomal subunit (mt-LSU). Mature mammalian 55S mitochondrial ribosomes consist of a small (28S) and a large (39S) subunit. The 28S small subunit contains a 12S ribosomal RNA (12S mt-rRNA) and 30 different proteins. The 39S large subunit contains a 16S rRNA (16S mt-rRNA), a copy of mitochondrial valine transfer RNA (mt-tRNA(Val)), which plays an integral structural role, and 52 different proteins. bL12m interacts with NOA1. Post-translationally, two mature forms are produced by differential two-step proteolytic cleavage. Cleaved by the mitochondrial processing protease to produce the long mature form and subsequently by the mitochondrial intermediate protease to produce the short mature form. In the presence of CUL3, undergoes 'Lys-63'-linked ubiquitination at Lys-150 which results in proteasomal degradation.

It localises to the mitochondrion matrix. Its function is as follows. As a component of the mitochondrial large ribosomal subunit, plays a role in mitochondrial translation. When present in mitochondria as a free protein not associated with the ribosome, associates with mitochondrial RNA polymerase POLRMT to activate transcription. Required for POLRMT stability. This is Large ribosomal subunit protein bL12m (MRPL12) from Homo sapiens (Human).